We begin with the raw amino-acid sequence, 189 residues long: PTS system glucose-specific EIIA component (189 aa).

The region spanning 31–135 (DEAFAEKIVG…SVITPVVIAN (105 aa)) is the PTS EIIA type-1 domain. Zn(2+) is bound by residues His68 and His83. His83 (tele-phosphohistidine intermediate; for EIIA activity) is an active-site residue. Phosphohistidine; by HPr is present on His83.

Heterodimer with glycerol kinase (glpk). Zn(2+) serves as cofactor.

Its subcellular location is the cytoplasm. Its function is as follows. The phosphoenolpyruvate-dependent sugar phosphotransferase system (sugar PTS), a major carbohydrate active transport system, catalyzes the phosphorylation of incoming sugar substrates concomitantly with their translocation across the cell membrane. The enzyme II complex composed of PtsG and Crr is involved in glucose transport. The sequence is that of PTS system glucose-specific EIIA component (crr) from Borreliella burgdorferi (strain ATCC 35210 / DSM 4680 / CIP 102532 / B31) (Borrelia burgdorferi).